The primary structure comprises 434 residues: Adenylosuccinate synthetase (434 aa).

GTP contacts are provided by residues glycine 22 to lysine 28 and glycine 50 to threonine 52. Residue aspartate 23 is the Proton acceptor of the active site. Aspartate 23 and glycine 50 together coordinate Mg(2+). Residues aspartate 23–lysine 26, asparagine 48–histidine 51, threonine 139, arginine 153, glutamine 234, threonine 249, and arginine 313 each bind IMP. Residue histidine 51 is the Proton donor of the active site. Residue alanine 309 to arginine 315 participates in substrate binding. GTP contacts are provided by residues arginine 315, lysine 341 to aspartate 343, and serine 423 to glycine 425.

It belongs to the adenylosuccinate synthetase family. In terms of assembly, homodimer. The cofactor is Mg(2+).

It localises to the cytoplasm. The enzyme catalyses IMP + L-aspartate + GTP = N(6)-(1,2-dicarboxyethyl)-AMP + GDP + phosphate + 2 H(+). Its pathway is purine metabolism; AMP biosynthesis via de novo pathway; AMP from IMP: step 1/2. Its function is as follows. Plays an important role in the de novo pathway of purine nucleotide biosynthesis. Catalyzes the first committed step in the biosynthesis of AMP from IMP. The polypeptide is Adenylosuccinate synthetase (Chlorobium chlorochromatii (strain CaD3)).